Here is an 83-residue protein sequence, read N- to C-terminus: Mu-theraphotoxin-Hhn2j 3 (83 aa).

Positions 1 to 21 (MKALMFLALAGLVLLFVVGYA) are cleaved as a signal peptide. The propeptide occupies 22 to 48 (SESEEKEFPIELLSKIFAVDVFKGEER). Intrachain disulfides connect C50–C65, C57–C70, and C64–C77. A Leucine amide modification is found at L81.

Belongs to the neurotoxin 10 (Hwtx-1) family. 15 (Hntx-3) subfamily. Monomer. In terms of tissue distribution, expressed by the venom gland.

The protein localises to the secreted. In terms of biological role, lethal neurotoxin. Selectively blocks tetrodotoxin-sensitive voltage-gated sodium channels (Nav). Does not affect tetrodotoxin-resistant voltage-gated sodium channels or calcium channels. This is Mu-theraphotoxin-Hhn2j 3 from Cyriopagopus hainanus (Chinese bird spider).